The following is an 813-amino-acid chain: Protein tramtrack, alpha isoform (813 aa).

The region spanning 33–98 (TDVTLAVEGQ…MYRGEVSVDQ (66 aa)) is the BTB domain. Disordered stretches follow at residues 118–148 (EVNDDKPSPAAAAAGAGATGSESTATTPQLQ), 171–324 (ANAG…GPSE), 356–428 (TTPA…MPKK), and 526–585 (AGLP…LDDQ). Over residues 125–145 (SPAAAAAGAGATGSESTATTP) the composition is skewed to low complexity. Over residues 176-187 (TPTLPVQPSLLS) the composition is skewed to polar residues. The segment covering 192-201 (PKRKRGRPRK) has biased composition (basic residues). 3 positions are modified to phosphoserine: S203, S205, and S206. T209 carries the phosphothreonine modification. Positions 254–285 (HTDDLNESRDSLPSKRSKNSKDHRVVSHHEDN) are enriched in basic and acidic residues. Polar residues-rich tracts occupy residues 302 to 324 (LFGSSSTTISATAPGGSSTGPSE), 356 to 369 (TTPAQQGSPQTPTK), and 377 to 388 (ATGSNNSNSLLK). The span at 560-578 (SGKKGAKRPIQRRRVRRKA) shows a compositional bias: basic residues. 2 consecutive C2H2-type zinc fingers follow at residues 610–638 (YRCTECAKENMQKTFKNKYSFQRHAFLYH) and 646–669 (FPCPVCSKEFSRPDKMKNHLKMTH). Phosphoserine is present on S682.

Interacts with CoRest/CG33525, suggesting that it acts by recruiting a CoRest-containing corepressor complex. Interacts with phyl.

Its subcellular location is the nucleus. Functionally, binds to a number of sites in the transcriptional regulatory region of ftz. Isoform alpha is required to repress genes that promote the R7 cell fate. Probable repressor of the transcription of the segmentation genes ftz, eve, h, odd, run, and en. May bind to the region 5'-AGGG[CT]GG-3'. Degradation of ttk is directed by binding of sinah or sina, via the adapter molecule phyl which binds to the BTB domain of ttk. The sequence is that of Protein tramtrack, alpha isoform (ttk) from Drosophila melanogaster (Fruit fly).